Here is a 373-residue protein sequence, read N- to C-terminus: Bifunctional enzyme IspD/IspF (373 aa).

The interval 1-213 (MSDLTLVLLG…CLQKPSATKR (213 aa)) is 2-C-methyl-D-erythritol 4-phosphate cytidylyltransferase. Residues 213 to 373 (RIGNGLDVHA…TLHYFDWSEI (161 aa)) are 2-C-methyl-D-erythritol 2,4-cyclodiphosphate synthase. Residues Asp219 and His221 each contribute to the a divalent metal cation site. Residues 219–221 (DVH) and 245–246 (HS) contribute to the 4-CDP-2-C-methyl-D-erythritol 2-phosphate site. An a divalent metal cation-binding site is contributed by His253. Residues 267–269 (DIG), 272–276 (FPDSD), 343–346 (TTTE), Phe350, and Arg353 contribute to the 4-CDP-2-C-methyl-D-erythritol 2-phosphate site.

It in the N-terminal section; belongs to the IspD/TarI cytidylyltransferase family. IspD subfamily. In the C-terminal section; belongs to the IspF family. A divalent metal cation serves as cofactor.

The enzyme catalyses 2-C-methyl-D-erythritol 4-phosphate + CTP + H(+) = 4-CDP-2-C-methyl-D-erythritol + diphosphate. It catalyses the reaction 4-CDP-2-C-methyl-D-erythritol 2-phosphate = 2-C-methyl-D-erythritol 2,4-cyclic diphosphate + CMP. Its pathway is isoprenoid biosynthesis; isopentenyl diphosphate biosynthesis via DXP pathway; isopentenyl diphosphate from 1-deoxy-D-xylulose 5-phosphate: step 2/6. It functions in the pathway isoprenoid biosynthesis; isopentenyl diphosphate biosynthesis via DXP pathway; isopentenyl diphosphate from 1-deoxy-D-xylulose 5-phosphate: step 4/6. Its function is as follows. Bifunctional enzyme that catalyzes the formation of 4-diphosphocytidyl-2-C-methyl-D-erythritol from CTP and 2-C-methyl-D-erythritol 4-phosphate (MEP) (IspD), and catalyzes the conversion of 4-diphosphocytidyl-2-C-methyl-D-erythritol 2-phosphate (CDP-ME2P) to 2-C-methyl-D-erythritol 2,4-cyclodiphosphate (ME-CPP) with a corresponding release of cytidine 5-monophosphate (CMP) (IspF). The polypeptide is Bifunctional enzyme IspD/IspF (Nitratiruptor sp. (strain SB155-2)).